Here is a 156-residue protein sequence, read N- to C-terminus: Ribosomal RNA large subunit methyltransferase H (156 aa).

S-adenosyl-L-methionine-binding positions include Leu73, Gly104, and 123–128 (LSPLTL).

It belongs to the RNA methyltransferase RlmH family. Homodimer.

The protein resides in the cytoplasm. The catalysed reaction is pseudouridine(1915) in 23S rRNA + S-adenosyl-L-methionine = N(3)-methylpseudouridine(1915) in 23S rRNA + S-adenosyl-L-homocysteine + H(+). Functionally, specifically methylates the pseudouridine at position 1915 (m3Psi1915) in 23S rRNA. This chain is Ribosomal RNA large subunit methyltransferase H, found in Pseudoalteromonas atlantica (strain T6c / ATCC BAA-1087).